The primary structure comprises 72 residues: Conotoxin im23a (72 aa).

An N-terminal signal peptide occupies residues 1-22 (MIMRMTLTLFVLVVMTAASASG). A propeptide spanning residues 23-28 (DALTEA) is cleaved from the precursor. Intrachain disulfides connect Cys34-Cys41, Cys45-Cys55, and Cys56-Cys71.

This sequence belongs to the conotoxin K superfamily. As to expression, expressed by the venom duct.

Its subcellular location is the secreted. Its function is as follows. Neurotoxin that induces excitatory symptoms in mice following intracranial administration. No symptoms are observed after intraperitoneal and intravenous (tail vein) injections. The polypeptide is Conotoxin im23a (Conus imperialis (Imperial cone)).